The following is a 197-amino-acid chain: Thymidylate kinase (197 aa).

7–14 (GIDGSGKS) contacts ATP.

It belongs to the thymidylate kinase family.

It catalyses the reaction dTMP + ATP = dTDP + ADP. Its function is as follows. Phosphorylation of dTMP to form dTDP in both de novo and salvage pathways of dTTP synthesis. This chain is Thymidylate kinase (tmk), found in Thermotoga maritima (strain ATCC 43589 / DSM 3109 / JCM 10099 / NBRC 100826 / MSB8).